The primary structure comprises 426 residues: 4-hydroxy-3-methylbut-2-en-1-yl diphosphate synthase (flavodoxin) (426 aa).

[4Fe-4S] cluster-binding residues include Cys-320, Cys-323, Cys-366, and Glu-373.

This sequence belongs to the IspG family. [4Fe-4S] cluster is required as a cofactor.

The catalysed reaction is (2E)-4-hydroxy-3-methylbut-2-enyl diphosphate + oxidized [flavodoxin] + H2O + 2 H(+) = 2-C-methyl-D-erythritol 2,4-cyclic diphosphate + reduced [flavodoxin]. The protein operates within isoprenoid biosynthesis; isopentenyl diphosphate biosynthesis via DXP pathway; isopentenyl diphosphate from 1-deoxy-D-xylulose 5-phosphate: step 5/6. Functionally, converts 2C-methyl-D-erythritol 2,4-cyclodiphosphate (ME-2,4cPP) into 1-hydroxy-2-methyl-2-(E)-butenyl 4-diphosphate. This chain is 4-hydroxy-3-methylbut-2-en-1-yl diphosphate synthase (flavodoxin), found in Wolbachia sp. subsp. Drosophila simulans (strain wRi).